The following is a 284-amino-acid chain: Tropomyosin (284 aa).

Residues 1–273 (MDAIKKKMVA…KEKYKAISDE (273 aa)) are a coiled coil. Over residues 110-130 (SGKLEEASKAADESERNRKVL) the composition is skewed to basic and acidic residues. The disordered stretch occupies residues 110-134 (SGKLEEASKAADESERNRKVLENLN).

It belongs to the tropomyosin family. As to quaternary structure, homodimer.

Functionally, tropomyosin, in association with the troponin complex, plays a central role in the calcium dependent regulation of muscle contraction. The sequence is that of Tropomyosin from Perna viridis (Asian green mussel).